Reading from the N-terminus, the 358-residue chain is Trace amine-associated receptor 7e (358 aa).

Topologically, residues 1 to 47 (MATDDASFPWDQDSILSRDLLSALSSQLCYENLNRSCIRSPYSPGPR) are extracellular. An N-linked (GlcNAc...) asparagine glycan is attached at Asn-34. 2 disulfides stabilise this stretch: Cys-37/Cys-201 and Cys-120/Cys-205. Residues 48-68 (LILHAVFGFSAVLAVCGNLLV) traverse the membrane as a helical segment. Over 69 to 83 (MTSILHFRQLHSPAN) the chain is Cytoplasmic. A helical transmembrane segment spans residues 84 to 104 (FLVASLACADLLVGLTVMPFS). Over 105–121 (MVRSVEGCWYFGDIYCK) the chain is Extracellular. A helical membrane pass occupies residues 122–143 (FHSSFDVSFCYSSIFHLCFISV). At 144–166 (DRYIAVSDPLIYLTRFTASVSGK) the chain is on the cytoplasmic side. The chain crosses the membrane as a helical span at residues 167–187 (CITFSWFLSIIYSFSLLYTGA). Over 188–212 (SEAGLEDLVSALTCVGGCQLAVNQS) the chain is Extracellular. The N-linked (GlcNAc...) asparagine glycan is linked to Asn-210. A helical membrane pass occupies residues 213–233 (WVFINFLLFLVPTLVMMTVYS). The Cytoplasmic segment spans residues 234–274 (KVFLIAKQQAQNIEKIGKQTARASESYKDRVAKRERKAAKT). A helical membrane pass occupies residues 275–295 (LGITVAAFLLSWLPYFIDSII). Over 296–309 (DAFLGFITPTYVYE) the chain is Extracellular. The chain crosses the membrane as a helical span at residues 310–333 (ILVWIAYYNSAMNPLIYAFFYPWF). The Cytoplasmic segment spans residues 334–358 (RKAIKLIVTGKILRENSSATNLFPE).

Belongs to the G-protein coupled receptor 1 family.

The protein resides in the cell membrane. In terms of biological role, olfactory receptor specific for N,N-dimethylalkylamines trace amines. Trace amine compounds are enriched in animal body fluids and act on trace amine-associated receptors (TAARs) to elicit both intraspecific and interspecific innate behaviors. Ligand-binding causes a conformation change that triggers signaling via G(s)-class of G alpha proteins (GNAL or GNAS). In Rattus norvegicus (Rat), this protein is Trace amine-associated receptor 7e.